The following is a 264-amino-acid chain: MKIDLITIFPEFFRGPLDHGIVSRAQKAGLVEITIRDLREFTHDRHRTVDDRPFGGGEGMVLKPEPIFECLEAMEIPPRGNRENVQVLVLSPQGRLFDQTMALELSKLDRLVLINGRYEGVDERVSEVLADGEISVGDFVLSGGELGSAIIVDAVTRLLPGALGNADSARQESFTAVAKEISEGPDSTCASGGLLDYPHYTRPAEFRGYVVPQVLQDGNHAEIQRWRRRRALEKTFKNRPDLLEGAELSKEDQKYLAQLRAGKD.

S-adenosyl-L-methionine contacts are provided by residues Gly116 and 136–141 (VGDFVL).

It belongs to the RNA methyltransferase TrmD family. As to quaternary structure, homodimer.

It is found in the cytoplasm. The enzyme catalyses guanosine(37) in tRNA + S-adenosyl-L-methionine = N(1)-methylguanosine(37) in tRNA + S-adenosyl-L-homocysteine + H(+). Specifically methylates guanosine-37 in various tRNAs. This Koribacter versatilis (strain Ellin345) protein is tRNA (guanine-N(1)-)-methyltransferase.